A 553-amino-acid chain; its full sequence is Arginine--tRNA ligase (553 aa).

The short motif at 130–140 (ANPTGDLHIGH) is the 'HIGH' region element.

It belongs to the class-I aminoacyl-tRNA synthetase family. Monomer.

Its subcellular location is the cytoplasm. It carries out the reaction tRNA(Arg) + L-arginine + ATP = L-arginyl-tRNA(Arg) + AMP + diphosphate. This is Arginine--tRNA ligase from Staphylococcus epidermidis (strain ATCC 12228 / FDA PCI 1200).